Consider the following 155-residue polypeptide: Snaclec agkicetin-C subunit alpha (155 aa).

The first 23 residues, Met-1–Ala-23, serve as a signal peptide directing secretion. 3 disulfide bridges follow: Cys-25-Cys-36, Cys-53-Cys-149, and Cys-124-Cys-141. In terms of domain architecture, C-type lectin spans Tyr-32–Lys-150.

It belongs to the snaclec family. In terms of assembly, heterodimer of subunits alpha and beta; disulfide-linked. Expressed by the venom gland.

The protein localises to the secreted. Its function is as follows. Is a potent glycoprotein Ibalpha (GP1BA) antagonist. Concentration-dependently inhibits botrocetin-, ristocetin- and low dose thrombin-induced platelet aggregation. Inhibits platelet adhesion only through inhibiting the vWF interaction with GP1BA, but has minimal effect on other platelet receptors, such as alpha-IIb/beta-3 (ITGA2B/ITGB3) or alpha-2/beta-1 (ITGA2/ITGB1). Causes an instant severe thrombocytopenia in rats and is not lethal to mice. The chain is Snaclec agkicetin-C subunit alpha from Deinagkistrodon acutus (Hundred-pace snake).